We begin with the raw amino-acid sequence, 653 residues long: MKSPPLLSPCLSWKRMAGIFFLPFISSGFAPRFKQEENFMLGRAHPSQPRFNWSHLTPLELKNRSVGLGTESTGRGKPHFTLEGHKFLIFGGSIHYFRVPREYWRDRLLKLKACGFNTVTTYVPWNLHEPERGKFDFSGNLDLEAFVLMAAEIGLWVILRPGRYICSEMDLGGLPSWLLQDPRLLLRTTNKSFIEAVEKYFDHLIPRVIPLQYRQAGPVIAVQVENEYGSFNKDKTYMPYLHKALLRRGIVELLLTSDGEKHVLSGHTKGVLAAINLQKLHQDTFNQLHKVQRDKPLLIMEYWVGWFDRWGDKHHVKDAKEVEHAVSEFIKYEISFNVYMFHGGTNFGFMNGATYFGKHSGIVTSYDYDAVLTEAGDYTEKYLKLQKLFQSVSATPLPRVPKLPPKAVYPPVRPSLYLPLWDALSYLNEPVRSRQPVNMENLPINNGSGQSYGLVLYEKSICSGGRLRAHAHDVAQVFLDETMIGILNENNKDLHIPELRDCRYLRILVENQGRVNFSWQIQNEQKGITGSVSINNSSLEGFTIYSLEMKMSFFERLRSATWKPVPDSHQGPAFYCGTLKAGPSPKDTFLSLLNWNYGFVFINGRNLGRYWNIGPQKTLYLPGVWLHPEDNEVILFEKMMSGSDIKSTDKPTL.

Glutamate 227 (proton donor) is an active-site residue. Glutamate 301 (nucleophile) is an active-site residue.

The protein belongs to the glycosyl hydrolase 35 family.

This Homo sapiens (Human) protein is Beta-galactosidase-1-like protein 3 (GLB1L3).